Here is a 202-residue protein sequence, read N- to C-terminus: MNPDYHYLFKLLLIGDSGVGKSCLLLRFADDTYSESFISTIGVDFKIRTIELNGKTIKLQIWDTAGQERFRTITSSYYRGAHGIIVVYDVTDKLTFENVRQWLQEIDRFACENVNKLLVGNKSDLVAKKVVDFNTAKAFADSLQIPFLETSAKQSTNVEQAFMTMATEIKNRLTASQPTQTVDKNKVVPGSSAPISPKSGCC.

GTP is bound by residues 15 to 23 (GDSGVGKSC), 33 to 40 (YSESFIST), 63 to 67 (DTAGQ), 121 to 124 (NKSD), and 151 to 153 (SAK). An Effector region motif is present at residues 37-45 (FISTIGVDF). The interval 180–202 (QTVDKNKVVPGSSAPISPKSGCC) is disordered. Residues cysteine 201 and cysteine 202 are each lipidated (S-geranylgeranyl cysteine).

This sequence belongs to the small GTPase superfamily. Rab family.

Its subcellular location is the cell membrane. This is Ras-related protein Rab-1A (rab1A) from Dictyostelium discoideum (Social amoeba).